The following is a 309-amino-acid chain: Sulfate adenylyltransferase subunit 2 (309 aa).

The protein belongs to the PAPS reductase family. CysD subfamily. In terms of assembly, heterodimer composed of CysD, the smaller subunit, and CysN.

The enzyme catalyses sulfate + ATP + H(+) = adenosine 5'-phosphosulfate + diphosphate. It participates in sulfur metabolism; hydrogen sulfide biosynthesis; sulfite from sulfate: step 1/3. With CysN forms the ATP sulfurylase (ATPS) that catalyzes the adenylation of sulfate producing adenosine 5'-phosphosulfate (APS) and diphosphate, the first enzymatic step in sulfur assimilation pathway. APS synthesis involves the formation of a high-energy phosphoric-sulfuric acid anhydride bond driven by GTP hydrolysis by CysN coupled to ATP hydrolysis by CysD. The sequence is that of Sulfate adenylyltransferase subunit 2 from Mycolicibacterium vanbaalenii (strain DSM 7251 / JCM 13017 / BCRC 16820 / KCTC 9966 / NRRL B-24157 / PYR-1) (Mycobacterium vanbaalenii).